The sequence spans 289 residues: MRTGPGWLLAAAALPFFACAQEATIDKVHDTPAVRGSIIANMLQEHDNPFTLYPYESNYLLYTYTSDLNKKAIESYNWSDNANKDEVKFQLSLAFPLWRGILGDNSLLGASYTQRSWWQLSNTGESAPFRETNYEPQLFLGFATDYSVGDWTLRDAEFGYNHQSNGRSDPTSRSWNRLYSRLMAQNGNWLVEVKPWYVIGDTSDNKNITKYMGYYQLKIGYQLGEAVLSAKGQYNWNTGYGGAELGVSYPITKHVRFYTQVYSGYGESLIDYDFNQTRVGMGVMLNDLF.

Residues 1–20 (MRTGPGWLLAAAALPFFACA) form the signal peptide. Residues 21-52 (QEATIDKVHDTPAVRGSIIANMLQEHDNPFTL) lie on the Periplasmic side of the membrane. Residues 53 to 65 (YPYESNYLLYTYT) form a beta stranded membrane-spanning segment. Over 66–84 (SDLNKKAIESYNWSDNANK) the chain is Extracellular. The chain crosses the membrane as a beta stranded span at residues 85-99 (DEVKFQLSLAFPLWR). Topologically, residues 100 to 105 (GILGDN) are periplasmic. A beta stranded membrane pass occupies residues 106-118 (SLLGASYTQRSWW). Over 119–128 (QLSNTGESAP) the chain is Extracellular. Ser-126 lines the Ca(2+) pocket. The chain crosses the membrane as a beta stranded span at residues 129 to 148 (FRETNYEPQLFLGFATDYSV). Over 149–150 (GD) the chain is Periplasmic. Residues 151-164 (WTLRDAEFGYNHQS) form a beta stranded membrane-spanning segment. His-162 (proton acceptor) is an active-site residue. Ser-164 functions as the Nucleophile in the catalytic mechanism. The Extracellular portion of the chain corresponds to 165 to 173 (NGRSDPTSR). The Ca(2+) site is built by Arg-167 and Ser-172. Residues 174-186 (SWNRLYSRLMAQN) form a beta stranded membrane-spanning segment. Topologically, residues 187–188 (GN) are periplasmic. The chain crosses the membrane as a beta stranded span at residues 189 to 198 (WLVEVKPWYV). At 199-216 (IGDTSDNKNITKYMGYYQ) the chain is on the extracellular side. Asp-204 serves as a coordination point for Ca(2+). Residues 217–223 (LKIGYQL) form a beta stranded membrane-spanning segment. The Periplasmic portion of the chain corresponds to 224-225 (GE). Residues 226–234 (AVLSAKGQY) traverse the membrane as a beta stranded segment. The Extracellular segment spans residues 235-241 (NWNTGYG). Residues 242–250 (GAELGVSYP) traverse the membrane as a beta stranded segment. The Periplasmic segment spans residues 251-255 (ITKHV). Residues 256–265 (RFYTQVYSGY) traverse the membrane as a beta stranded segment. The Extracellular portion of the chain corresponds to 266-274 (GESLIDYDF). Residues 275–286 (NQTRVGMGVMLN) form a beta stranded membrane-spanning segment. Residues 287–289 (DLF) lie on the Periplasmic side of the membrane.

It belongs to the phospholipase A1 family. Homodimer; dimerization is reversible, and the dimeric form is the active one. Requires Ca(2+) as cofactor.

It is found in the cell outer membrane. The catalysed reaction is a 1,2-diacyl-sn-glycero-3-phosphocholine + H2O = a 2-acyl-sn-glycero-3-phosphocholine + a fatty acid + H(+). The enzyme catalyses a 1,2-diacyl-sn-glycero-3-phosphocholine + H2O = a 1-acyl-sn-glycero-3-phosphocholine + a fatty acid + H(+). In terms of biological role, hydrolysis of phosphatidylcholine with phospholipase A2 (EC 3.1.1.4) and phospholipase A1 (EC 3.1.1.32) activities. The chain is Phospholipase A1 (pldA) from Proteus vulgaris.